The sequence spans 374 residues: 4-hydroxy-3-methylbut-2-en-1-yl diphosphate synthase (flavodoxin) (374 aa).

Cysteine 268, cysteine 271, cysteine 303, and glutamate 310 together coordinate [4Fe-4S] cluster.

It belongs to the IspG family. It depends on [4Fe-4S] cluster as a cofactor.

It carries out the reaction (2E)-4-hydroxy-3-methylbut-2-enyl diphosphate + oxidized [flavodoxin] + H2O + 2 H(+) = 2-C-methyl-D-erythritol 2,4-cyclic diphosphate + reduced [flavodoxin]. The protein operates within isoprenoid biosynthesis; isopentenyl diphosphate biosynthesis via DXP pathway; isopentenyl diphosphate from 1-deoxy-D-xylulose 5-phosphate: step 5/6. Functionally, converts 2C-methyl-D-erythritol 2,4-cyclodiphosphate (ME-2,4cPP) into 1-hydroxy-2-methyl-2-(E)-butenyl 4-diphosphate. This is 4-hydroxy-3-methylbut-2-en-1-yl diphosphate synthase (flavodoxin) from Geobacillus thermodenitrificans (strain NG80-2).